A 293-amino-acid chain; its full sequence is Kallikrein-5 (293 aa).

An N-terminal signal peptide occupies residues 1–22; that stretch reads MATARPPWMWVLCALITALLLG. Polar residues predominate over residues 37 to 49; sequence HPSNTVPSGSNQD. Positions 37–68 are disordered; sequence HPSNTVPSGSNQDLGAGAGEDARSDDSSSRII. The Peptidase S1 domain maps to 67-290; it reads IINGSDCDMH…FTKWIQETIQ (224 aa). Residue N69 is glycosylated (N-linked (GlcNAc...) asparagine). Cystine bridges form between C73-C206, C93-C109, C178-C279, C185-C251, C217-C231, and C241-C266. Active-site charge relay system residues include H108 and D153. 2 N-linked (GlcNAc...) asparagine glycosylation sites follow: N173 and N208. S245 serves as the catalytic Charge relay system. Residue N252 is glycosylated (N-linked (GlcNAc...) asparagine).

This sequence belongs to the peptidase S1 family. Kallikrein subfamily. In terms of assembly, interacts with SPINK9. As to expression, expressed in skin, breast, brain and testis. Expressed at the stratum granulosum of palmar skin.

It localises to the secreted. With respect to regulation, inhibited by Zn2+. Functionally, may be involved in desquamation. This chain is Kallikrein-5, found in Homo sapiens (Human).